Here is a 61-residue protein sequence, read N- to C-terminus: Large ribosomal subunit protein uL30 (61 aa).

Belongs to the universal ribosomal protein uL30 family. As to quaternary structure, part of the 50S ribosomal subunit.

This is Large ribosomal subunit protein uL30 from Francisella tularensis subsp. tularensis (strain FSC 198).